We begin with the raw amino-acid sequence, 189 residues long: Putative OVARIAN TUMOR DOMAIN-containing deubiquitinating enzyme 8 (189 aa).

In terms of domain architecture, OTU spans 1–103; it reads MMKSDGNCQF…GIHFNSIYKK (103 aa). D5 is an active-site residue. The active-site Nucleophile is the C8. H96 is an active-site residue. The disordered stretch occupies residues 105 to 189; it reads KEKGSRSSSS…NRNHHFHYSE (85 aa). Residues 120–181 are a coiled coil; it reads WMKLQRKKEN…KKEKKEKKNR (62 aa). 2 consecutive short sequence motifs (nuclear localization signal) follow at residues 125 to 132 and 163 to 170; these read RKKENEAK and KKKAKVQK. Over residues 126–174 the composition is skewed to basic and acidic residues; the sequence is KKENEAKKKEEEEKERKDMEKEEKKKDKEDKKKDKEDKKKAKVQKEKKE. Residues 175 to 189 are compositionally biased toward basic residues; that stretch reads KKEKKNRNHHFHYSE.

It belongs to the peptidase C85 family.

It localises to the nucleus. It carries out the reaction Thiol-dependent hydrolysis of ester, thioester, amide, peptide and isopeptide bonds formed by the C-terminal Gly of ubiquitin (a 76-residue protein attached to proteins as an intracellular targeting signal).. In terms of biological role, hydrolase that can remove conjugated ubiquitin from proteins in vitro and may therefore play an important regulatory role at the level of protein turnover by preventing degradation. This Arabidopsis thaliana (Mouse-ear cress) protein is Putative OVARIAN TUMOR DOMAIN-containing deubiquitinating enzyme 8.